Consider the following 495-residue polypeptide: MNNPSKAAQKKPKSNLIDGWEVVIGIEIHTQLATQSKIFSGSSTEFGQDPNTQASLVDLAMPGVLPVLNEEVVNLAIRFGLGIDAYIDQASVFARKNYFYPDSPKGYQISQMDNPIVGLGHIDIQLEDGTVKRIGVTRAHLEEDAGKSIHDQFEGQSGIDLNRAGTPLLEIVSEPDMRSVEEAVAYIKSIHTLVRWLGISDGNMAEGSFRADCNVSLRRPGDAFGTRCELKNLNSFRFIEQAINVEIERQMEILEWGGTIDQETRLFDPNKMETRSMRSKEEANDYRYFPDPDLLPVIIADEQIKAIKATMPELPAARRERFIAEFAITEYDAHVLTLSREMADFYEAVVAAAGGAAHGKIAANWVMGEFSGALNKAGLELADSPVSAEQLGGMIARIVDNTISGKIAKQVFGFMWDEGKSADTIIQEKSLKQETDTGAIEAIIKDVLAANEKMVEEYKSGKEKAFNGLVGQVMKASKGKANPAQVNELMKKLIG.

It belongs to the GatB/GatE family. GatB subfamily. Heterotrimer of A, B and C subunits.

It carries out the reaction L-glutamyl-tRNA(Gln) + L-glutamine + ATP + H2O = L-glutaminyl-tRNA(Gln) + L-glutamate + ADP + phosphate + H(+). It catalyses the reaction L-aspartyl-tRNA(Asn) + L-glutamine + ATP + H2O = L-asparaginyl-tRNA(Asn) + L-glutamate + ADP + phosphate + 2 H(+). Allows the formation of correctly charged Asn-tRNA(Asn) or Gln-tRNA(Gln) through the transamidation of misacylated Asp-tRNA(Asn) or Glu-tRNA(Gln) in organisms which lack either or both of asparaginyl-tRNA or glutaminyl-tRNA synthetases. The reaction takes place in the presence of glutamine and ATP through an activated phospho-Asp-tRNA(Asn) or phospho-Glu-tRNA(Gln). The protein is Aspartyl/glutamyl-tRNA(Asn/Gln) amidotransferase subunit B of Acinetobacter baylyi (strain ATCC 33305 / BD413 / ADP1).